The sequence spans 236 residues: CHD1 helical C-terminal domain containing protein 1 (236 aa).

Residues 44-145 (LDQDTFKTCK…SSQPAKFLVT (102 aa)) are CHD1 helical C-terminal domain (CHCT). Residues 184-236 (LSNMQTPGQGSPLPGQPRSQDHVKKDSLRELSQKPKLKRKRIKEAPETPETEP) form a disordered region. Residues 202 to 216 (SQDHVKKDSLRELSQ) are compositionally biased toward basic and acidic residues.

The protein localises to the cytoplasm. It is found in the nucleus. Functionally, may play a role in regulation of apoptosis. The polypeptide is CHD1 helical C-terminal domain containing protein 1 (Homo sapiens (Human)).